The chain runs to 529 residues: MTNRNVIKNVLISVSDTSNIIEFSKSLISKNIKLFATKGTANFLKKNNIYATDITNYTNFPEIMNGRIKTLHHKIYASILAQPKHDKKTIEKYNIILMDIVVINFYPFEEASNNTNLHLNDIIEHIDIGGPAIVRAAAKNYKNVLVVTQPNLYQSIVNEMNLNNNIISETTKLKFATIAFKHTMNYDNNIYQYLSKKNKTVPKNTQLQTLLPSHLTINFKKKQDLCYGENKQQQASWYTNTSKNTSGRMKIKQLQGKILSYNNLSDIHLALSCIHEFNKTTCAIIKHGNPCGVATAKNNDQAYKLAYETDPISAFGGIIVFNQKLNDVTARKIIKTQFSEIILAPDFTQEAKKIFDKKPNLRIIKYDPNYNYLNYNIDIKSIYGDILVQSNTNSIININQWDIVSKKRPNEQEINDAKFALRVVKHLKSNSIVLIKNQITISIGSGQTSRIDATKIAIYKANNNNISLNHTTLASDAFFPFSDSIDLISKSGITCIVQPGGSIRDNEIIMSANKYNISMIFTKQRYFKH.

Positions methionine 1 to threonine 148 constitute an MGS-like domain.

This sequence belongs to the PurH family.

It carries out the reaction (6R)-10-formyltetrahydrofolate + 5-amino-1-(5-phospho-beta-D-ribosyl)imidazole-4-carboxamide = 5-formamido-1-(5-phospho-D-ribosyl)imidazole-4-carboxamide + (6S)-5,6,7,8-tetrahydrofolate. The enzyme catalyses IMP + H2O = 5-formamido-1-(5-phospho-D-ribosyl)imidazole-4-carboxamide. The protein operates within purine metabolism; IMP biosynthesis via de novo pathway; 5-formamido-1-(5-phospho-D-ribosyl)imidazole-4-carboxamide from 5-amino-1-(5-phospho-D-ribosyl)imidazole-4-carboxamide (10-formyl THF route): step 1/1. It participates in purine metabolism; IMP biosynthesis via de novo pathway; IMP from 5-formamido-1-(5-phospho-D-ribosyl)imidazole-4-carboxamide: step 1/1. The sequence is that of Bifunctional purine biosynthesis protein PurH from Buchnera aphidicola subsp. Baizongia pistaciae (strain Bp).